The chain runs to 429 residues: Lysophosphatidic acid phosphatase type 6 (429 aa).

The transit peptide at 1-32 directs the protein to the mitochondrion; sequence MISRVFKLRMWAPVGVLTSLTYCLHQRRVALA. A substrate binding region spans residues 58-169; sequence RHGARSPLKP…VFIRSTNIYR (112 aa). Catalysis depends on H59, which acts as the Nucleophile. D336 (proton donor) is an active-site residue.

Belongs to the histidine acid phosphatase family. As to quaternary structure, monomer. Detected in brain (at protein level).

Its subcellular location is the mitochondrion. The catalysed reaction is a phosphate monoester + H2O = an alcohol + phosphate. It carries out the reaction 1-(9Z-octadecenoyl)-sn-glycero-3-phosphate + H2O = 1-(9Z-octadecenoyl)-sn-glycerol + phosphate. Hydrolyzes lysophosphatidic acid (LPA) containing a medium length fatty acid chain to the corresponding monoacylglycerol. Has highest activity with lysophosphatidic acid containing myristate (C14:0), monounsaturated oleate (C18:1) or palmitate (C16:0), and lower activity with C18:0 and C6:0 lysophosphatidic acid. The chain is Lysophosphatidic acid phosphatase type 6 (ACP6) from Bos taurus (Bovine).